We begin with the raw amino-acid sequence, 458 residues long: MNKANPKNTPSVVPKKVFIKTYGCQMNVYDSQRMTDSLSSKGYVATQTPNDADLILLNTCHIREKAAEKLYSDLGRLRVMRQARTLDKPLMIGVTGCVAQAEGNEILRRAPMVDLVIGPQMYHRLPDLLEQTKQGKKIVETDYPVEDKFAHLPPHNKRAVRKRGVSAFLTVQEGCDKFCTFCVVPYTRGAEISRSVEQITEEARQLIEAGVKEITLLGQNVNGWHGQIANGKTWRLGDLLYHLAKLDGLKRLRYTTSHPRDMDDSLIAAHRDLDILMPYLHLPVQSGSDRILKAMNRQHKSIHYLHLIEKIRTARPDIAFSGDFIVGFPGETDEDFEETVKLIKQVQYSSAYSFKYSPRPGTVGATMKNHVDEAVKDARLQHLQVLLLEQQNAFLRSKIGQTTDVLIEKVGRHSGQMVGRSPWLLPVVVDTEASTGTVMSIHIKNAGSNSFVGEIANV.

Positions 15–134 constitute an MTTase N-terminal domain; the sequence is KKVFIKTYGC…LPDLLEQTKQ (120 aa). 6 residues coordinate [4Fe-4S] cluster: C24, C60, C97, C175, C179, and C182. The 233-residue stretch at 161–393 folds into the Radical SAM core domain; that stretch reads RKRGVSAFLT…QVLLLEQQNA (233 aa). One can recognise a TRAM domain in the interval 396–457; it reads RSKIGQTTDV…SNSFVGEIAN (62 aa).

It belongs to the methylthiotransferase family. MiaB subfamily. Monomer. It depends on [4Fe-4S] cluster as a cofactor.

It localises to the cytoplasm. The enzyme catalyses N(6)-dimethylallyladenosine(37) in tRNA + (sulfur carrier)-SH + AH2 + 2 S-adenosyl-L-methionine = 2-methylsulfanyl-N(6)-dimethylallyladenosine(37) in tRNA + (sulfur carrier)-H + 5'-deoxyadenosine + L-methionine + A + S-adenosyl-L-homocysteine + 2 H(+). Its function is as follows. Catalyzes the methylthiolation of N6-(dimethylallyl)adenosine (i(6)A), leading to the formation of 2-methylthio-N6-(dimethylallyl)adenosine (ms(2)i(6)A) at position 37 in tRNAs that read codons beginning with uridine. The polypeptide is tRNA-2-methylthio-N(6)-dimethylallyladenosine synthase (Bartonella quintana (strain Toulouse) (Rochalimaea quintana)).